Consider the following 148-residue polypeptide: MFRGSTQLSLDSKGRLAIPAKYRDELFASCGGNIVVTADPSRCLLIYPQPVWEPIEKKLNSFPSLSPQIRSLQRLIIGNASDVEMDSSGRILISAPLRQFAGLQKEVVLAGQGEKFELWDMAKWDLEIDTATTYKDGDIPPELEGFSL.

2 consecutive SpoVT-AbrB domains span residues 5-51 (STQL…PQPV) and 80-123 (ASDV…DMAK).

The protein belongs to the MraZ family. As to quaternary structure, forms oligomers.

The protein localises to the cytoplasm. The protein resides in the nucleoid. This chain is Transcriptional regulator MraZ, found in Nitrosomonas europaea (strain ATCC 19718 / CIP 103999 / KCTC 2705 / NBRC 14298).